The primary structure comprises 711 residues: Double-stranded RNA-specific editase 1 (711 aa).

Residues 1-79 are disordered; the sequence is MDIEDEENMS…RRKTPGPVLP (79 aa). The span at 63–73 shows a compositional bias: basic residues; that stretch reads SKYRLKKRRKT. Residues 78–144 enclose the DRBM 1 domain; sequence LPKNALMQLN…AEKALRSFVQ (67 aa). Interaction with substrate RNA regions lie at residues 83 to 88 and 104 to 105; these read LMQLNE and VH. Phosphoserine is present on Ser149. A disordered region spans residues 176 to 220; it reads LFNGFETPDKSEPPFYVGSNGDDSFSSSGDVSLSASPVPASLTQP. The span at 192 to 213 shows a compositional bias: low complexity; sequence VGSNGDDSFSSSGDVSLSASPV. The 68-residue stretch at 231 to 298 folds into the DRBM 2 domain; that stretch reads PSGKNPVMIL…AQSALATVFN (68 aa). Interaction with substrate RNA regions lie at residues 237-242 and His259; that span reads VMILNE. The A to I editase domain maps to 370–707; that stretch reads SVSTGTKCIN…VEKPTEQDQF (338 aa). Position 394 (His394) interacts with Zn(2+). The active-site Proton donor is the Glu396. The 1D-myo-inositol hexakisphosphate site is built by Arg400 and Arg401. The Zn(2+) site is built by Cys451 and Cys526. 1D-myo-inositol hexakisphosphate is bound by residues Lys529, Arg532, Lys639, Lys672, Lys682, and Lys700.

In terms of assembly, homodimer. Homodimerization is essential for its catalytic activity. Can form heterodimers with isoform 5 of ADAR/ADAR1. Requires 1D-myo-inositol hexakisphosphate as cofactor. In terms of tissue distribution, brain and peripheral tissues.

The protein resides in the nucleus. It is found in the nucleolus. It catalyses the reaction adenosine in double-stranded RNA + H2O + H(+) = inosine in double-stranded RNA + NH4(+). Catalyzes the hydrolytic deamination of adenosine to inosine in double-stranded RNA (dsRNA) referred to as A-to-I RNA editing. This may affect gene expression and function in a number of ways that include mRNA translation by changing codons and hence the amino acid sequence of proteins; pre-mRNA splicing by altering splice site recognition sequences; RNA stability by changing sequences involved in nuclease recognition; genetic stability in the case of RNA virus genomes by changing sequences during viral RNA replication; and RNA structure-dependent activities such as microRNA production or targeting or protein-RNA interactions. Can edit both viral and cellular RNAs and can edit RNAs at multiple sites (hyper-editing) or at specific sites (site-specific editing). Its cellular RNA substrates include: bladder cancer-associated protein (BLCAP), neurotransmitter receptors for glutamate (GRIA2 and GRIK2) and serotonin (HTR2C), GABA receptor (GABRA3) and potassium voltage-gated channel (KCNA1). Site-specific RNA editing of transcripts encoding these proteins results in amino acid substitutions which consequently alter their functional activities. Edits GRIA2 at both the Q/R and R/G sites efficiently but converts the adenosine in hotspot1 much less efficiently. Can inhibit cell proliferation and migration and can stimulate exocytosis. The polypeptide is Double-stranded RNA-specific editase 1 (Adarb1) (Rattus norvegicus (Rat)).